A 158-amino-acid chain; its full sequence is MTSDRNGKLKPRLEAALNALKSVPCVDKQKLGAFGFCIGGLCSLDCARYRFDGIRAVISFHGTLTPIEGIPLELLDDNSIQVHHGDADKHVSKVTVDAFHEEMRARNSDFVFISHGKAMHSFTDPESAGIAPSGVGYDANAEKRSWKATLEFLKEAFA.

This is an uncharacterized protein from Caenorhabditis elegans.